Consider the following 114-residue polypeptide: MGFPIPDPYVWDPSFRTFYSIIDDEHKTLFNGIFHLAIDDNADNLGELRRCTGKHFLNEQVLMQASQYQFYDEHKKEHETFIHALDNWKGDVKWAKSWLVNHIKTIDFKYKGKI.

Positions 26, 55, 59, 74, 78, 102, and 107 each coordinate Fe cation.

Belongs to the hemerythrin family. As to quaternary structure, homooctamer.

Functionally, hemerythrin is a respiratory protein in blood cells of certain marine worms. The oxygen-binding site in each chain contains two iron atoms. The protein is Hemerythrin of Phascolopsis gouldii (Peanut worm).